The following is a 465-amino-acid chain: Ribulose bisphosphate carboxylase large chain (465 aa).

Position 4 is an N6,N6,N6-trimethyllysine (Lys4). The substrate site is built by Asn113 and Thr163. The Proton acceptor role is filled by Lys165. Lys167 lines the substrate pocket. Positions 191, 193, and 194 each coordinate Mg(2+). An N6-carboxylysine modification is found at Lys191. His284 acts as the Proton acceptor in catalysis. Arg285, His317, and Ser369 together coordinate substrate.

It belongs to the RuBisCO large chain family. Type I subfamily. In terms of assembly, heterohexadecamer of 8 large chains and 8 small chains; disulfide-linked. The disulfide link is formed within the large subunit homodimers. Mg(2+) is required as a cofactor. Post-translationally, the disulfide bond which can form in the large chain dimeric partners within the hexadecamer appears to be associated with oxidative stress and protein turnover.

Its subcellular location is the plastid. It localises to the chloroplast. It catalyses the reaction 2 (2R)-3-phosphoglycerate + 2 H(+) = D-ribulose 1,5-bisphosphate + CO2 + H2O. The enzyme catalyses D-ribulose 1,5-bisphosphate + O2 = 2-phosphoglycolate + (2R)-3-phosphoglycerate + 2 H(+). Functionally, ruBisCO catalyzes two reactions: the carboxylation of D-ribulose 1,5-bisphosphate, the primary event in carbon dioxide fixation, as well as the oxidative fragmentation of the pentose substrate in the photorespiration process. Both reactions occur simultaneously and in competition at the same active site. This chain is Ribulose bisphosphate carboxylase large chain, found in Ulmus alata (Winged elm).